The primary structure comprises 692 residues: Follicle-stimulating hormone receptor (692 aa).

An N-terminal signal peptide occupies residues 1-17; the sequence is MALLLVSLLAFLGSGSG. 2 cysteine pairs are disulfide-bonded: cysteine 18/cysteine 25 and cysteine 23/cysteine 32. The LRRNT domain occupies 18 to 46; that stretch reads CHHWLCHCSNRVFLCQDSKVTEIPPDLPR. Residues 18–365 are Extracellular-facing; that stretch reads CHHWLCHCSN…EDIMGYNILR (348 aa). LRR repeat units follow at residues 49–72, 73–97, 98–118, 119–143, 144–169, 170–192, 193–216, 217–240, and 241–259; these read IELR…FGDL, EKIE…LPNL, HEIR…AFQN, LPSL…KIQS, LQKV…MGLS, FESV…AFNG, TQLD…VFQG, ASGP…GLEN, and LKKL…PSLD. Asparagine 191 and asparagine 199 each carry an N-linked (GlcNAc...) asparagine glycan. 4 cysteine pairs are disulfide-bonded: cysteine 275-cysteine 345, cysteine 276-cysteine 292, cysteine 276-cysteine 355, and cysteine 292-cysteine 337. A glycan (N-linked (GlcNAc...) asparagine) is linked at asparagine 293. Residue tyrosine 334 is modified to Sulfotyrosine. The helical transmembrane segment at 366 to 386 threads the bilayer; it reads VLIWFISILAITGNTTVLVVL. Over 387 to 397 the chain is Cytoplasmic; sequence TTSQYKLTVPR. Residues 398 to 420 form a helical membrane-spanning segment; sequence FLMCNLAFADLCIGIYLLLIASV. Topologically, residues 421–442 are extracellular; it reads DIHTKSQYHNYAIDWQTGAGCD. Cysteine 441 and cysteine 516 are joined by a disulfide. Residues 443–464 traverse the membrane as a helical segment; sequence AAGFFTVFASELSVYTLAAITL. At 465–484 the chain is on the cytoplasmic side; the sequence is ERWHTITHAMQLECKVQLCH. Residues 485 to 507 traverse the membrane as a helical segment; sequence AASIMVLGWAFAFAAALFPIFGI. The Extracellular portion of the chain corresponds to 508-527; that stretch reads SSYMKVSICLPMDIDSPLSQ. Residues 528 to 549 traverse the membrane as a helical segment; sequence LYVMALLVLNALAFVVICGCYT. At 550–572 the chain is on the cytoplasmic side; sequence HIYLTVRNPNIVSSSRDTKIAKR. A helical membrane pass occupies residues 573 to 596; the sequence is MATLIFTDFLCMAPILFFAISASL. The Extracellular segment spans residues 597 to 607; that stretch reads KVPLITVSKAK. A helical membrane pass occupies residues 608 to 629; the sequence is ILLVLFYPINSCANPFLYAIFT. Residues 630-692 are Cytoplasmic-facing; sequence KNFRRDFFVL…LVPLNHSVQN (63 aa).

The protein belongs to the G-protein coupled receptor 1 family. FSH/LSH/TSH subfamily. As to quaternary structure, homotrimer. Functions as a homotrimer binding the FSH hormone heterodimer composed of CGA and FSHB. Interacts with ARRB2. Interacts with APPL2; interaction is independent of follicle stimulating hormone stimulation. In terms of processing, N-glycosylated; indirectly required for FSH-binding, possibly via a conformational change that allows high affinity binding of hormone. Sulfated.

Its subcellular location is the cell membrane. In terms of biological role, g protein-coupled receptor for follitropin, the follicle-stimulating hormone. Through cAMP production activates the downstream PI3K-AKT and ERK1/ERK2 signaling pathways. The protein is Follicle-stimulating hormone receptor (Fshr) of Mus musculus (Mouse).